The following is a 940-amino-acid chain: Serine/threonine-protein phosphatase 1 regulatory subunit 10 (940 aa).

Positions 1–348 (MGSGPIDPKE…EPAPPSEAMD (348 aa)) are interaction with TOX4. Positions 73–147 (KLLNNWLTYS…SDWMAVIRSQ (75 aa)) constitute a TFIIS N-terminal domain. Disordered stretches follow at residues 147-211 (QSST…FRST), 247-270 (SNVA…NTTP), 304-400 (KIKK…KSVT), and 533-905 (YVET…HGGD). Basic and acidic residues-rich tracts occupy residues 153 to 166 (AEKD…EGKS) and 174 to 196 (PLTE…EKPK). A Glycyl lysine isopeptide (Lys-Gly) (interchain with G-Cter in SUMO2) cross-link involves residue Lys-179. Residue Thr-256 is modified to Phosphothreonine. Lys-262 participates in a covalent cross-link: Glycyl lysine isopeptide (Lys-Gly) (interchain with G-Cter in SUMO2). The residue at position 313 (Ser-313) is a Phosphoserine. The span at 325-336 (KTSTEPSTAKPS) shows a compositional bias: low complexity. The necessary for interaction with PPP1CA stretch occupies residues 357-433 (PPVEVPELMD…NKIKDFGEAA (77 aa)). Ser-382 is modified (phosphoserine). The necessary for interaction with PPP1CC stretch occupies residues 393–408 (GRKRKSVTWPEEGKLR). The short motif at 394–423 (RKRKSVTWPEEGKLREYFYFELDETERVNV) is the PP1-binding motif element. Position 398 is a phosphoserine; by PKA (Ser-398). The tract at residues 418 to 619 (TERVNVNKIK…IKQMLVPHGL (202 aa)) is interaction with WDR82. 2 stretches are compositionally biased toward gly residues: residues 540–551 (GGSGGSPDGAGG) and 565–579 (MGAG…GGGI). Ser-545 is modified (phosphoserine). Polar residues predominate over residues 583–595 (EILTSIMGSPNSH). Ser-591 carries the phosphoserine modification. Residues 596-611 (PSEELLKQPDYSDKIK) are compositionally biased toward basic and acidic residues. A compositionally biased stretch (pro residues) spans 644 to 655 (PPGPGGPMPGPH). Arg-665 carries the post-translational modification Omega-N-methylarginine. Residues 676-690 (GDPFWDGPGDPMRGG) show a composition bias toward low complexity. An Omega-N-methylarginine modification is found at Arg-693. Residues 714-723 (EPPPPPPPPF) show a composition bias toward pro residues. 2 stretches are compositionally biased toward gly residues: residues 726-764 (ARGG…GMGN) and 790-845 (SSMG…GSGG). Arg-739 carries the post-translational modification Omega-N-methylarginine. Composition is skewed to basic and acidic residues over residues 862-886 (PHDV…HDGP) and 894-903 (RGHDGGHSHG). The C3H1-type zinc-finger motif lies at 906–934 (MSNRPVCRHFMMKGNCRYENNCAFYHPGV).

In terms of assembly, component of the PNUTS-PP1 complex (also named PTW/PP1 complex), composed of PPP1R10/PNUTS, TOX4, WDR82, and PPP1CA (or PPP1CB or PPP1CC). Post-translationally, phosphorylated on Ser-398 by PKA within the region necessary for interaction with PPP1CA.

Its subcellular location is the nucleus. The protein resides in the chromosome. Substrate-recognition component of the PNUTS-PP1 protein phosphatase complex, a protein phosphatase 1 (PP1) complex that promotes RNA polymerase II transcription pause-release, allowing transcription elongation. Promoter-proximal pausing by RNA polymerase II is a transcription halt following transcription initiation but prior to elongation, which acts as a checkpoint to control that transcripts are favorably configured for transcriptional elongation. The PNUTS-PP1 complex mediates the release of RNA polymerase II from promoter-proximal region of genes by catalyzing dephosphorylation of proteins involved in transcription, such as AFF4, CDK9, MEPCE, INTS12, NCBP1, POLR2M/GDOWN1 and SUPT6H. The PNUTS-PP1 complex also regulates RNA polymerase II transcription termination by mediating dephosphorylation of SUPT5H in termination zones downstream of poly(A) sites, thereby promoting deceleration of RNA polymerase II transcription. PNUTS-PP1 complex is also involved in the response to replication stress by mediating dephosphorylation of POLR2A at 'Ser-5' of the CTD, promoting RNA polymerase II degradation. The PNUTS-PP1 complex also plays a role in the control of chromatin structure and cell cycle progression during the transition from mitosis into interphase. PNUTS-PP1 complex mediates dephosphorylation of MYC, promoting MYC stability by preventing MYC ubiquitination by the SCF(FBXW7) complex. In addition to acts as a substrate-recognition component, PPP1R10/PNUTS also acts as a nuclear targeting subunit for the PNUTS-PP1 complex. In some context, PPP1R10/PNUTS also acts as an inhibitor of protein phosphatase 1 (PP1) activity by preventing access to substrates, such as RB. This is Serine/threonine-protein phosphatase 1 regulatory subunit 10 (PPP1R10) from Macaca mulatta (Rhesus macaque).